We begin with the raw amino-acid sequence, 127 residues long: Large ribosomal subunit protein bL17 (127 aa).

Belongs to the bacterial ribosomal protein bL17 family. In terms of assembly, part of the 50S ribosomal subunit. Contacts protein L32.

This Stenotrophomonas maltophilia (strain R551-3) protein is Large ribosomal subunit protein bL17.